Reading from the N-terminus, the 246-residue chain is Peroxisomal membrane protein 11A (246 aa).

The Cytoplasmic segment spans residues 1-93; sequence MDAFIRVANQ…LCLTLANLNR (93 aa). The chain crosses the membrane as a helical span at residues 94-114; that stretch reads VVYYICDTVLWAKSVGLTSGI. Topologically, residues 115–217 are lumenal; that stretch reads NREKWQMRAA…LNQLGIYKSN (103 aa). A helical transmembrane segment spans residues 218-238; the sequence is LGVVGFGGLVSSVAGLITVVY. A required for homodimerization, interaction with PEX11G, and peroxisomal localization region spans residues 218–238; it reads LGVVGFGGLVSSVAGLITVVY. At 239 to 246 the chain is on the cytoplasmic side; it reads PQLKLKAR.

It belongs to the peroxin-11 family. As to quaternary structure, homodimer. Heterodimer with PEX11G. Probably interacts with COPB2 and COPA. Interacts with PEX19. Interacts with FIS1. In terms of tissue distribution, expressed at high levels in kidney, liver, lung, brain, and testis and at low levels in heart, spleen and skeletal muscle.

It is found in the peroxisome membrane. Functionally, may be involved in peroxisomal proliferation and may regulate peroxisomes division. May mediate binding of coatomer proteins to the peroxisomal membrane. Promotes membrane protrusion and elongation on the peroxisomal surface. The polypeptide is Peroxisomal membrane protein 11A (Pex11a) (Rattus norvegicus (Rat)).